A 272-amino-acid chain; its full sequence is Indole-3-glycerol phosphate synthase (272 aa).

It belongs to the TrpC family.

It carries out the reaction 1-(2-carboxyphenylamino)-1-deoxy-D-ribulose 5-phosphate + H(+) = (1S,2R)-1-C-(indol-3-yl)glycerol 3-phosphate + CO2 + H2O. Its pathway is amino-acid biosynthesis; L-tryptophan biosynthesis; L-tryptophan from chorismate: step 4/5. The polypeptide is Indole-3-glycerol phosphate synthase (Mycolicibacterium smegmatis (strain ATCC 700084 / mc(2)155) (Mycobacterium smegmatis)).